Here is a 46-residue protein sequence, read N- to C-terminus: Defensin-like protein AX2 (46 aa).

4 cysteine pairs are disulfide-bonded: C3-C46, C14-C34, C20-C40, and C24-C42.

In terms of tissue distribution, leaves and flowers.

Functionally, strong inhibiting activity against C.beticola and other filamentous fungi. Little or no effect against bacteria. The protein is Defensin-like protein AX2 of Beta vulgaris (Sugar beet).